The primary structure comprises 232 residues: MFNINMEIKEKSITTFIGPSGCGKTTLLKSINRLNDLIDGVKMSGVIKIFDKDIFDKDIDITKLRTEVGMVFQKPNPFPISIYDNVVYGLRSLGIKDKKILDQICEESLVKAALWDEVKDILISPALGLSGGQQQRLCIARAIAMKPKILLMDEPTSALDPIATLKVEELVLDLKKDYTIVMVTHSLQQATRISDYTGYFLKGELVEFNKTKKIFTNPKDRRTENYISGRYE.

Positions 1-227 (MFNINMEIKE…PKDRRTENYI (227 aa)) constitute an ABC transporter domain. Residue 18 to 25 (GPSGCGKT) participates in ATP binding.

Belongs to the ABC transporter superfamily. Phosphate importer (TC 3.A.1.7) family. The complex is composed of two ATP-binding proteins (PstB), two transmembrane proteins (PstC and PstA) and a solute-binding protein (PstS).

It is found in the cell membrane. It catalyses the reaction phosphate(out) + ATP + H2O = ADP + 2 phosphate(in) + H(+). Part of the ABC transporter complex PstSACB involved in phosphate import. Responsible for energy coupling to the transport system. This chain is Phosphate import ATP-binding protein PstB, found in Mycoplasma mycoides subsp. mycoides SC (strain CCUG 32753 / NCTC 10114 / PG1).